The sequence spans 166 residues: MTIVYLSLGTNMRDRAAYLQKALETLADLPQTRLLAQSSIYETAAWGKTDQADFLNMACQLDTQLTAADFLKETQAIEQSLGRVRHEKWGSRTIDIDILLFGEEVYDTKELKVPHPYMTERAFVLIPLLELQPDLKLPPNHKFLRDYLAALDQSDITLFSAQQTEF.

It belongs to the HPPK family.

The catalysed reaction is 6-hydroxymethyl-7,8-dihydropterin + ATP = (7,8-dihydropterin-6-yl)methyl diphosphate + AMP + H(+). The protein operates within cofactor biosynthesis; tetrahydrofolate biosynthesis; 2-amino-4-hydroxy-6-hydroxymethyl-7,8-dihydropteridine diphosphate from 7,8-dihydroneopterin triphosphate: step 4/4. Catalyzes the transfer of pyrophosphate from adenosine triphosphate (ATP) to 6-hydroxymethyl-7,8-dihydropterin, an enzymatic step in folate biosynthesis pathway. This Streptococcus pyogenes serotype M18 (strain MGAS8232) protein is 2-amino-4-hydroxy-6-hydroxymethyldihydropteridine pyrophosphokinase (folK).